The following is a 152-amino-acid chain: MTEYKKVIAQNNKAIFNYFIEERLEAGIVLNGSEVQSLRQGKASIEESHAADTGHEVFLYNCHIAEYEKANRFNHSTRRPRKLLLHTKEIKKIIGRIRIKGYTLVALSMYFNKQNKVKVELGIAKGKKLHDKRESIKEKDWKRDQSRLIRQK.

Belongs to the SmpB family.

Its subcellular location is the cytoplasm. In terms of biological role, required for rescue of stalled ribosomes mediated by trans-translation. Binds to transfer-messenger RNA (tmRNA), required for stable association of tmRNA with ribosomes. tmRNA and SmpB together mimic tRNA shape, replacing the anticodon stem-loop with SmpB. tmRNA is encoded by the ssrA gene; the 2 termini fold to resemble tRNA(Ala) and it encodes a 'tag peptide', a short internal open reading frame. During trans-translation Ala-aminoacylated tmRNA acts like a tRNA, entering the A-site of stalled ribosomes, displacing the stalled mRNA. The ribosome then switches to translate the ORF on the tmRNA; the nascent peptide is terminated with the 'tag peptide' encoded by the tmRNA and targeted for degradation. The ribosome is freed to recommence translation, which seems to be the essential function of trans-translation. The polypeptide is SsrA-binding protein (Rickettsia akari (strain Hartford)).